Consider the following 292-residue polypeptide: uncharacterized protein (292 aa).

Helical transmembrane passes span 6–26, 32–52, 68–88, 94–114, 123–143, 147–167, 182–202, 214–234, 242–262, and 265–285; these read LGII…KVGI, LLFS…ILFI, IIMS…GMQF, TSVL…FSLN, MGLV…MLNI, ALFG…ANVF, AWHL…FEAV, SLLF…FWVL, ASMA…LQLH, and ITIN…MNTF. EamA domains lie at 13 to 137 and 159 to 285; these read LIWG…FIFG and LSWG…MNTF.

It belongs to the EamA transporter family.

The protein resides in the cell membrane. This is an uncharacterized protein from Bacillus subtilis (strain 168).